A 443-amino-acid chain; its full sequence is 26S proteasome regulatory subunit 4 homolog B (443 aa).

2 disordered regions span residues 1 to 55 and 87 to 108; these read MGQG…LPTV and RLKP…LRGT. Basic and acidic residues-rich tracts occupy residues 12-28 and 87-106; these read QGDR…KKFE and RLKP…DDLR. An ATP-binding site is contributed by 229 to 236; that stretch reads GEPGTGKT. Glycyl lysine isopeptide (Lys-Gly) (interchain with G-Cter in ubiquitin) cross-links involve residues lysine 296 and lysine 433.

Belongs to the AAA ATPase family. As to quaternary structure, component of the 19S regulatory particle (RP/PA700) base subcomplex of the 26S proteasome. The 26S proteasome is composed of a core protease (CP), known as the 20S proteasome, capped at one or both ends by the 19S regulatory particle (RP/PA700). The RP/PA700 complex is composed of at least 17 different subunits in two subcomplexes, the base and the lid, which form the portions proximal and distal to the 20S proteolytic core, respectively. As to expression, preferentially expressed in the root and shoot apical meristem.

Its subcellular location is the cytoplasm. The protein resides in the nucleus. Its function is as follows. The 26S protease is involved in the ATP-dependent degradation of ubiquitinated proteins. The regulatory (or ATPase) complex confers ATP dependency and substrate specificity to the 26S complex. Acts redundantly with RPT2A in the regulation of gametogenesis. With RPT2A plays a critical role in 26S proteasome assembly. This is 26S proteasome regulatory subunit 4 homolog B from Arabidopsis thaliana (Mouse-ear cress).